We begin with the raw amino-acid sequence, 351 residues long: Aromatic amino acid aminotransferase (351 aa).

The residue at position 215 (Lys-215) is an N6-(pyridoxal phosphate)lysine.

This sequence belongs to the class-II pyridoxal-phosphate-dependent aminotransferase family. As to quaternary structure, homodimer. Pyridoxal 5'-phosphate serves as cofactor.

It carries out the reaction an aromatic L-alpha-amino acid + 2-oxoglutarate = an aromatic oxo-acid + L-glutamate. Functionally, aminotransferase that catalyzes the conversion of aromatic amino acids and 2-oxoglutarate into corresponding aromatic oxo acids and L-glutamate. The sequence is that of Aromatic amino acid aminotransferase from Mycolicibacterium vanbaalenii (strain DSM 7251 / JCM 13017 / BCRC 16820 / KCTC 9966 / NRRL B-24157 / PYR-1) (Mycobacterium vanbaalenii).